A 235-amino-acid chain; its full sequence is Transmembrane protein 215 (235 aa).

The next 2 membrane-spanning stretches (helical) occupy residues 12 to 32 (LVVALVSVFLVFGFMFTVSGM) and 40 to 60 (IPLLAIGPAICLPGIAAIALA). The segment at 99-145 (SDLESGKGSSDELAKKAGLRGKPPPQSQGEVSVASSINSPTPTEEGE) is disordered. Polar residues predominate over residues 125–140 (SQGEVSVASSINSPTP).

It is found in the membrane. This chain is Transmembrane protein 215 (TMEM215), found in Homo sapiens (Human).